A 125-amino-acid chain; its full sequence is Large ribosomal subunit protein bL12 (125 aa).

Belongs to the bacterial ribosomal protein bL12 family. Homodimer. Part of the ribosomal stalk of the 50S ribosomal subunit. Forms a multimeric L10(L12)X complex, where L10 forms an elongated spine to which 2 to 4 L12 dimers bind in a sequential fashion. Binds GTP-bound translation factors.

In terms of biological role, forms part of the ribosomal stalk which helps the ribosome interact with GTP-bound translation factors. Is thus essential for accurate translation. The chain is Large ribosomal subunit protein bL12 from Helicobacter pylori (strain HPAG1).